A 485-amino-acid polypeptide reads, in one-letter code: ATP synthase subunit beta (485 aa).

Over residues 1 to 11 (MPATETADKNT) the composition is skewed to basic and acidic residues. The tract at residues 1–20 (MPATETADKNTKSANSDTSG) is disordered. 170–177 (GGAGVGKT) is a binding site for ATP.

This sequence belongs to the ATPase alpha/beta chains family. F-type ATPases have 2 components, CF(1) - the catalytic core - and CF(0) - the membrane proton channel. CF(1) has five subunits: alpha(3), beta(3), gamma(1), delta(1), epsilon(1). CF(0) has three main subunits: a(1), b(2) and c(9-12). The alpha and beta chains form an alternating ring which encloses part of the gamma chain. CF(1) is attached to CF(0) by a central stalk formed by the gamma and epsilon chains, while a peripheral stalk is formed by the delta and b chains.

Its subcellular location is the cell membrane. It carries out the reaction ATP + H2O + 4 H(+)(in) = ADP + phosphate + 5 H(+)(out). Its function is as follows. Produces ATP from ADP in the presence of a proton gradient across the membrane. The catalytic sites are hosted primarily by the beta subunits. This chain is ATP synthase subunit beta, found in Mycobacterium avium (strain 104).